Reading from the N-terminus, the 137-residue chain is Large ribosomal subunit protein uL16 (137 aa).

Belongs to the universal ribosomal protein uL16 family. In terms of assembly, part of the 50S ribosomal subunit.

In terms of biological role, binds 23S rRNA and is also seen to make contacts with the A and possibly P site tRNAs. The sequence is that of Large ribosomal subunit protein uL16 from Streptococcus uberis (strain ATCC BAA-854 / 0140J).